Here is a 92-residue protein sequence, read N- to C-terminus: UPF0473 protein Cbei_1107 (92 aa).

Belongs to the UPF0473 family.

The chain is UPF0473 protein Cbei_1107 from Clostridium beijerinckii (strain ATCC 51743 / NCIMB 8052) (Clostridium acetobutylicum).